The sequence spans 363 residues: Spermidine/putrescine import ATP-binding protein PotA (363 aa).

Positions 6 to 236 (LEIRNVTRRF…PRSRFVADFI (231 aa)) constitute an ABC transporter domain. 38–45 (GPSGCGKT) contacts ATP.

Belongs to the ABC transporter superfamily. Spermidine/putrescine importer (TC 3.A.1.11.1) family. In terms of assembly, the complex is composed of two ATP-binding proteins (PotA), two transmembrane proteins (PotB and PotC) and a solute-binding protein (PotD).

The protein resides in the cell inner membrane. The catalysed reaction is ATP + H2O + polyamine-[polyamine-binding protein]Side 1 = ADP + phosphate + polyamineSide 2 + [polyamine-binding protein]Side 1.. Functionally, part of the ABC transporter complex PotABCD involved in spermidine/putrescine import. Responsible for energy coupling to the transport system. This Pseudomonas aeruginosa (strain UCBPP-PA14) protein is Spermidine/putrescine import ATP-binding protein PotA.